The following is a 276-amino-acid chain: Large ribosomal subunit protein uL2 (276 aa).

The interval 223–276 (GVAMNPVDHPHGGGEGRGKGHHPTSPWGLPTKGYKTRRGKRPSDKFIVRRRNEA) is disordered. Composition is skewed to basic and acidic residues over residues 230–240 (DHPHGGGEGRG) and 263–276 (RPSD…RNEA).

Belongs to the universal ribosomal protein uL2 family. As to quaternary structure, part of the 50S ribosomal subunit. Forms a bridge to the 30S subunit in the 70S ribosome.

One of the primary rRNA binding proteins. Required for association of the 30S and 50S subunits to form the 70S ribosome, for tRNA binding and peptide bond formation. It has been suggested to have peptidyltransferase activity; this is somewhat controversial. Makes several contacts with the 16S rRNA in the 70S ribosome. The chain is Large ribosomal subunit protein uL2 from Thermotoga petrophila (strain ATCC BAA-488 / DSM 13995 / JCM 10881 / RKU-1).